A 184-amino-acid chain; its full sequence is uncharacterized protein (184 aa).

Residues 1–20 (MKKQILALVCGVIFSSSTWA) form the signal peptide.

The protein to E.coli YtfJ.

The protein resides in the periplasm. This is an uncharacterized protein from Haemophilus influenzae (strain ATCC 51907 / DSM 11121 / KW20 / Rd).